Consider the following 307-residue polypeptide: MNTGKPQKRAVNGVLLLDKPEGLSSNTALQKARRLFHAEKAGHTGVLDPLATGLLPVCFGEATKFAQYLLDADKAYTATLKLGEASSTGDAEGEIIATARADISLAEFQTACQALTGNIRQVPPMFSALKHEGKPLYEYARKGIVIERKARYITVYAIDIAEFDAPKAVIDVRCSKGTYIRTLSEDIAKHIGTFAHLTALRRTETAGFTIAQSHTLEALANLNETERDSLLLPCDVLVSHFPQTVLNDYAVHMLHCGQRPRFEEDLPSDTPVRVYTENGRFVGLAEYQKEICRLKALRLMNTAASAA.

Catalysis depends on Asp48, which acts as the Nucleophile.

The protein belongs to the pseudouridine synthase TruB family. Type 1 subfamily.

It carries out the reaction uridine(55) in tRNA = pseudouridine(55) in tRNA. Its function is as follows. Responsible for synthesis of pseudouridine from uracil-55 in the psi GC loop of transfer RNAs. This chain is tRNA pseudouridine synthase B, found in Neisseria meningitidis serogroup B (strain ATCC BAA-335 / MC58).